The primary structure comprises 94 residues: ESAT-6-like protein EsxI (94 aa).

This sequence belongs to the WXG100 family. ESAT-6 subfamily.

It localises to the secreted. In Mycobacterium tuberculosis (strain ATCC 25618 / H37Rv), this protein is ESAT-6-like protein EsxI.